The chain runs to 187 residues: Elongation factor P (187 aa).

It belongs to the elongation factor P family.

The protein localises to the cytoplasm. It participates in protein biosynthesis; polypeptide chain elongation. In terms of biological role, involved in peptide bond synthesis. Stimulates efficient translation and peptide-bond synthesis on native or reconstituted 70S ribosomes in vitro. Probably functions indirectly by altering the affinity of the ribosome for aminoacyl-tRNA, thus increasing their reactivity as acceptors for peptidyl transferase. This chain is Elongation factor P, found in Rhodococcus opacus (strain B4).